A 196-amino-acid polypeptide reads, in one-letter code: Phosphoheptose isomerase (196 aa).

The region spanning Met-34–Ala-196 is the SIS domain. Residue Asn-49 to Gly-51 participates in substrate binding. Residues His-58 and Glu-62 each coordinate Zn(2+). Substrate-binding positions include Glu-62, Asn-91–Asp-92, Ser-117–Ser-119, Ser-122, and Gln-172. The Zn(2+) site is built by Gln-172 and His-180.

The protein belongs to the SIS family. GmhA subfamily. As to quaternary structure, homotetramer. It depends on Zn(2+) as a cofactor.

The protein resides in the cytoplasm. The catalysed reaction is 2 D-sedoheptulose 7-phosphate = D-glycero-alpha-D-manno-heptose 7-phosphate + D-glycero-beta-D-manno-heptose 7-phosphate. It participates in carbohydrate biosynthesis; D-glycero-D-manno-heptose 7-phosphate biosynthesis; D-glycero-alpha-D-manno-heptose 7-phosphate and D-glycero-beta-D-manno-heptose 7-phosphate from sedoheptulose 7-phosphate: step 1/1. Its function is as follows. Catalyzes the isomerization of sedoheptulose 7-phosphate in D-glycero-D-manno-heptose 7-phosphate. In Shewanella denitrificans (strain OS217 / ATCC BAA-1090 / DSM 15013), this protein is Phosphoheptose isomerase.